The sequence spans 503 residues: Aminoaldehyde dehydrogenase 2, peroxisomal (503 aa).

Na(+) contacts are provided by Ile28 and Asp99. Positions 161 and 185 each coordinate NAD(+). Leu189 lines the Na(+) pocket. Ser239 contributes to the NAD(+) binding site. The Proton acceptor role is filled by Glu260. The active-site Nucleophile is the Cys294. A Microbody targeting signal motif is present at residues 501 to 503 (AKL).

This sequence belongs to the aldehyde dehydrogenase family. In terms of assembly, forms homodimers.

Its subcellular location is the peroxisome. The enzyme catalyses 3-aminopropanal + NAD(+) + H2O = beta-alanine + NADH + 2 H(+). It catalyses the reaction 4-aminobutanal + NAD(+) + H2O = 4-aminobutanoate + NADH + 2 H(+). It carries out the reaction 4-guanidinobutanal + NAD(+) + H2O = 4-guanidinobutanoate + NADH + 2 H(+). It functions in the pathway amine and polyamine biosynthesis; betaine biosynthesis via choline pathway; betaine from betaine aldehyde: step 1/1. Functionally, dehydrogenase that catalyzes the oxidation of several aminoaldehydes. Metabolizes and detoxifies aldehyde products of polyamine degradation to non-toxic amino acids. Catalyzes the oxidation of 3-aminopropanal to beta-alanine. Catalyzes the oxidation of 4-aminobutanal to 4-aminobutanoate. Catalyzes the oxidation of 4-guanidinobutanal to 4-guanidinobutanoate. The sequence is that of Aminoaldehyde dehydrogenase 2, peroxisomal from Pisum sativum (Garden pea).